A 132-amino-acid polypeptide reads, in one-letter code: Small ribosomal subunit protein uS8 (132 aa).

This sequence belongs to the universal ribosomal protein uS8 family. Part of the 30S ribosomal subunit. Contacts proteins S5 and S12.

Its function is as follows. One of the primary rRNA binding proteins, it binds directly to 16S rRNA central domain where it helps coordinate assembly of the platform of the 30S subunit. This is Small ribosomal subunit protein uS8 from Xylella fastidiosa (strain M12).